We begin with the raw amino-acid sequence, 386 residues long: Cytoplasmic 60S subunit biogenesis factor ZNF622 (386 aa).

A2 is subject to N-acetylalanine. 2 consecutive U1-type zinc fingers follow at residues 4 to 28 (YTCITCRVAFRDAEMQRAHYKTDWH) and 67 to 91 (TYCTVCSKKFATFNAYENHLKSRRH). The interval 135–237 (AIKAQPSTSP…AEDAEAEESP (103 aa)) is disordered. Basic and acidic residues predominate over residues 165-176 (GTPERDPTEKPP). Acidic residues predominate over residues 194 to 235 (EESEEEGEEDDEDWEDIDSDDGLECENPGVEEEDAEDAEAEE). S269 carries the post-translational modification Phosphoserine.

Belongs to the REI1 family. In terms of assembly, homo- and heterodimer. Associates with pre-60S ribosomal particles. Interacts with MELK and MYBL2. Interacts with DNAJC21. In terms of processing, phosphorylated by MELK. The phosphorylation may redirect the protein to the nucleus. Ubiquitinated by HECTD1, leading to its degradation.

The protein resides in the cytoplasm. Its subcellular location is the nucleus. Functionally, pre-60S-associated cytoplasmic factor involved in the cytoplasmic maturation of the 60S subunit. The chain is Cytoplasmic 60S subunit biogenesis factor ZNF622 (Znf622) from Rattus norvegicus (Rat).